The primary structure comprises 412 residues: Proteasome-activating nucleotidase (412 aa).

Positions 18-72 (YRYLVDRVAGMESQNQELKEQIRQLESDKRYIETQKIRYEREVRKLKSEIEHLKT) form a coiled coil. ATP is bound by residues 197 to 202 (GTGKTL) and H336. The interval 410 to 412 (MFA) is docks into pockets in the proteasome alpha-ring to cause gate opening.

This sequence belongs to the AAA ATPase family. In terms of assembly, homohexamer. The hexameric complex has a two-ring architecture resembling a top hat that caps the 20S proteasome core at one or both ends. Upon ATP-binding, the C-terminus of PAN interacts with the alpha-rings of the proteasome core by binding to the intersubunit pockets.

It is found in the cytoplasm. ATPase which is responsible for recognizing, binding, unfolding and translocation of substrate proteins into the archaeal 20S proteasome core particle. Is essential for opening the gate of the 20S proteasome via an interaction with its C-terminus, thereby allowing substrate entry and access to the site of proteolysis. Thus, the C-termini of the proteasomal ATPase function like a 'key in a lock' to induce gate opening and therefore regulate proteolysis. Unfolding activity requires energy from ATP hydrolysis, whereas ATP binding alone promotes ATPase-20S proteasome association which triggers gate opening, and supports translocation of unfolded substrates. This chain is Proteasome-activating nucleotidase, found in Methanospirillum hungatei JF-1 (strain ATCC 27890 / DSM 864 / NBRC 100397 / JF-1).